Here is a 417-residue protein sequence, read N- to C-terminus: Pre-mRNA-splicing factor PRP46 (417 aa).

7 WD repeats span residues 119-159 (AHQG…LKAT), 162-201 (GHIMGVRSLAVSSRYPYLFSGSEDKTVKCWDLERTNSSSG), 209-248 (GHVGGIYAMALHPELDLLFTGGRDSVIRVWDLRSRTEIMV), 251-290 (GHRSDITSIASQIGDPQIITSSMDATIRLWDIRKATTQLA), 293-334 (HHSK…NEFG), 337-376 (GENKIINTLSINPSNNTLFSGYDDGRMEFYDYVSGDLLQS), and 385-417 (STESAIYASTFDMSGLRLITCEGDKSIKIWGEE).

Belongs to the WD repeat PRL1/PRL2 family. Associated with the spliceosome.

It localises to the cytoplasm. Its subcellular location is the nucleus. Functionally, involved in pre-mRNA splicing and required for cell cycle progression at G2/M. The sequence is that of Pre-mRNA-splicing factor PRP46 (PRP46) from Debaryomyces hansenii (strain ATCC 36239 / CBS 767 / BCRC 21394 / JCM 1990 / NBRC 0083 / IGC 2968) (Yeast).